A 138-amino-acid chain; its full sequence is Phosphoribosyl-AMP cyclohydrolase (138 aa).

A disordered region spans residues 1 to 23 (MSEQSAPSPTPAAELSSDPASPL). D100 serves as a coordination point for Mg(2+). C101 lines the Zn(2+) pocket. Mg(2+) contacts are provided by D102 and D104. 2 residues coordinate Zn(2+): C117 and C124.

The protein belongs to the PRA-CH family. Homodimer. It depends on Mg(2+) as a cofactor. Zn(2+) is required as a cofactor.

It localises to the cytoplasm. It catalyses the reaction 1-(5-phospho-beta-D-ribosyl)-5'-AMP + H2O = 1-(5-phospho-beta-D-ribosyl)-5-[(5-phospho-beta-D-ribosylamino)methylideneamino]imidazole-4-carboxamide. Its pathway is amino-acid biosynthesis; L-histidine biosynthesis; L-histidine from 5-phospho-alpha-D-ribose 1-diphosphate: step 3/9. Catalyzes the hydrolysis of the adenine ring of phosphoribosyl-AMP. This chain is Phosphoribosyl-AMP cyclohydrolase, found in Paenarthrobacter aurescens (strain TC1).